Consider the following 221-residue polypeptide: Phosphoribosylformylglycinamidine synthase subunit PurQ (221 aa).

Residues 5-221 form the Glutamine amidotransferase type-1 domain; that stretch reads TVGIVVFPGS…LYTLRSLITQ (217 aa). Cysteine 89 (nucleophile) is an active-site residue. Active-site residues include histidine 197 and glutamate 199.

In terms of assembly, part of the FGAM synthase complex composed of 1 PurL, 1 PurQ and 2 PurS subunits.

The protein localises to the cytoplasm. The catalysed reaction is N(2)-formyl-N(1)-(5-phospho-beta-D-ribosyl)glycinamide + L-glutamine + ATP + H2O = 2-formamido-N(1)-(5-O-phospho-beta-D-ribosyl)acetamidine + L-glutamate + ADP + phosphate + H(+). It carries out the reaction L-glutamine + H2O = L-glutamate + NH4(+). Its pathway is purine metabolism; IMP biosynthesis via de novo pathway; 5-amino-1-(5-phospho-D-ribosyl)imidazole from N(2)-formyl-N(1)-(5-phospho-D-ribosyl)glycinamide: step 1/2. Part of the phosphoribosylformylglycinamidine synthase complex involved in the purines biosynthetic pathway. Catalyzes the ATP-dependent conversion of formylglycinamide ribonucleotide (FGAR) and glutamine to yield formylglycinamidine ribonucleotide (FGAM) and glutamate. The FGAM synthase complex is composed of three subunits. PurQ produces an ammonia molecule by converting glutamine to glutamate. PurL transfers the ammonia molecule to FGAR to form FGAM in an ATP-dependent manner. PurS interacts with PurQ and PurL and is thought to assist in the transfer of the ammonia molecule from PurQ to PurL. The chain is Phosphoribosylformylglycinamidine synthase subunit PurQ from Prochlorococcus marinus subsp. pastoris (strain CCMP1986 / NIES-2087 / MED4).